The following is a 240-amino-acid chain: MSDIKYNRVILKLSGEALAGEKGFGINPPVLKDVAKELKEVHELGVQIAIVVGGGNMWRGVTGAELGMERAQADYIGMLATIMNALSLQDALESLDVPTRVQTSIEMRQIAEPYIRRKAIRHLEKDRIVIFAGGTGSPYFSTDTTAALRAAEINADAILMGKNGVDGVYNADPNKDASAVKFDHLTHMDLIEKNLHVMDTTASSLSMDNHIPLVVFNLNTPGNIMKVVKGQEVGTTIEGD.

12–15 (KLSG) provides a ligand contact to ATP. Residues 20–25 (GEKGFG) are involved in allosteric activation by GTP. Gly-54 contacts UMP. Positions 55 and 59 each coordinate ATP. UMP-binding positions include Asp-74 and 135-142 (TGSPYFST). Asn-163, Tyr-169, and Asp-172 together coordinate ATP.

This sequence belongs to the UMP kinase family. In terms of assembly, homohexamer.

It is found in the cytoplasm. The catalysed reaction is UMP + ATP = UDP + ADP. It functions in the pathway pyrimidine metabolism; CTP biosynthesis via de novo pathway; UDP from UMP (UMPK route): step 1/1. Its activity is regulated as follows. Allosterically activated by GTP. Inhibited by UTP. In terms of biological role, catalyzes the reversible phosphorylation of UMP to UDP. The polypeptide is Uridylate kinase (Limosilactobacillus reuteri (Lactobacillus reuteri)).